A 227-amino-acid chain; its full sequence is Flagellar L-ring protein 2 (227 aa).

Positions 1–17 are cleaved as a signal peptide; it reads MKSKLAITMVSALLLAA. Residue Cys-18 is the site of N-palmitoyl cysteine attachment. A lipid anchor (S-diacylglycerol cysteine) is attached at Cys-18.

The protein belongs to the FlgH family. As to quaternary structure, the basal body constitutes a major portion of the flagellar organelle and consists of four rings (L,P,S, and M) mounted on a central rod.

The protein localises to the cell outer membrane. The protein resides in the bacterial flagellum basal body. Its function is as follows. Assembles around the rod to form the L-ring and probably protects the motor/basal body from shearing forces during rotation. In Chromobacterium violaceum (strain ATCC 12472 / DSM 30191 / JCM 1249 / CCUG 213 / NBRC 12614 / NCIMB 9131 / NCTC 9757 / MK), this protein is Flagellar L-ring protein 2.